The primary structure comprises 497 residues: Probable malate:quinone oxidoreductase (497 aa).

Belongs to the MQO family. Requires FAD as cofactor.

The catalysed reaction is (S)-malate + a quinone = a quinol + oxaloacetate. It participates in carbohydrate metabolism; tricarboxylic acid cycle; oxaloacetate from (S)-malate (quinone route): step 1/1. The polypeptide is Probable malate:quinone oxidoreductase (Rhodopseudomonas palustris (strain ATCC BAA-98 / CGA009)).